Consider the following 208-residue polypeptide: Proheparin-binding EGF-like growth factor (208 aa).

The first 23 residues, 1–23 (MKLLPSVVLKLFLAAVFSALVTG), serve as a signal peptide directing secretion. Positions 24-62 (ESLERLRRGLADGTSNLVSPTESTDQLLPPGGGRGREVL) are excised as a propeptide. Residues 24 to 161 (ESLERLRRGL…NRLYTYDHTT (138 aa)) lie on the Extracellular side of the membrane. A compositionally biased stretch (polar residues) spans 37–49 (TSNLVSPTESTDQ). 2 disordered regions span residues 37-57 (TSNL…GGGR) and 81-104 (QALA…LGKK). Thr-85 is a glycosylation site (O-linked (GalNAc...) threonine). Residues 93–102 (KRKKKGKGLG) are compositionally biased toward basic residues. The EGF-like domain occupies 104–144 (KRDPCLRKYKDFCIHGECKYVKELRAPSCICHPGYHGERCH). Disulfide bonds link Cys-108–Cys-121, Cys-116–Cys-132, and Cys-134–Cys-143. Residues 149–208 (PVKNRLYTYDHTTILAVVAVVLSSVCLLVIVGLLMFRYHRRGGYDVENEEKVKLGVTASH) constitute a propeptide, C-terminal. Residues 162–182 (ILAVVAVVLSSVCLLVIVGLL) form a helical membrane-spanning segment. The Cytoplasmic portion of the chain corresponds to 183-208 (MFRYHRRGGYDVENEEKVKLGVTASH).

Interacts with FBLN1. Interacts with EGFR and ERBB4. Post-translationally, O-glycosylated. As to expression, macrophages, midbrain, cerebellum, hypothalamus, cerebral cortex, bulbourethral gland, lung, heart ventricle, kidney, skin, prostate, seminal vesicle, testis; at low levels in lymph node, thymus, spleen; not detected in pituitary, olfactory bulb, thyroid, duodenum, pancreas, liver, submaxillary gland.

The protein localises to the secreted. Its subcellular location is the extracellular space. It is found in the cell membrane. In terms of biological role, growth factor that mediates its effects via EGFR, ERBB2 and ERBB4. Required for normal cardiac valve formation and normal heart function. Promotes smooth muscle cell proliferation. May be involved in macrophage-mediated cellular proliferation. It is mitogenic for fibroblasts, but not endothelial cells. It is able to bind EGF receptor/EGFR with higher affinity than EGF itself and is a far more potent mitogen for smooth muscle cells than EGF. Also acts as a diphtheria toxin receptor. This Sus scrofa (Pig) protein is Proheparin-binding EGF-like growth factor (HBEGF).